A 152-amino-acid chain; its full sequence is Large ribosomal subunit protein uL22 (152 aa).

Belongs to the universal ribosomal protein uL22 family. In terms of assembly, part of the 50S ribosomal subunit.

This protein binds specifically to 23S rRNA. It makes multiple contacts with different domains of the 23S rRNA in the assembled 50S subunit and ribosome. Functionally, the globular domain of the protein is located near the polypeptide exit tunnel on the outside of the subunit, while an extended beta-hairpin is found that lines the wall of the exit tunnel in the center of the 70S ribosome. The protein is Large ribosomal subunit protein uL22 of Cenarchaeum symbiosum (strain A).